The primary structure comprises 151 residues: 3-dehydroquinate dehydratase (151 aa).

Tyrosine 26 serves as the catalytic Proton acceptor. 3 residues coordinate substrate: asparagine 77, histidine 83, and aspartate 90. Catalysis depends on histidine 103, which acts as the Proton donor. Residues 104-105 (LS) and arginine 114 contribute to the substrate site.

This sequence belongs to the type-II 3-dehydroquinase family. In terms of assembly, homododecamer.

The catalysed reaction is 3-dehydroquinate = 3-dehydroshikimate + H2O. Its pathway is metabolic intermediate biosynthesis; chorismate biosynthesis; chorismate from D-erythrose 4-phosphate and phosphoenolpyruvate: step 3/7. Its function is as follows. Catalyzes a trans-dehydration via an enolate intermediate. This is 3-dehydroquinate dehydratase from Pelodictyon phaeoclathratiforme (strain DSM 5477 / BU-1).